A 353-amino-acid chain; its full sequence is Photosystem II D2 protein (353 aa).

An N-acetylthreonine modification is found at Thr-2. Thr-2 is subject to Phosphothreonine. A helical transmembrane segment spans residues 41–61 (CAYFALGGWFTGTTFVTSWYT). Residue His-118 coordinates chlorophyll a. The chain crosses the membrane as a helical span at residues 125–141 (GFMLRQFELARSVQLRP). Positions 130 and 143 each coordinate pheophytin a. The chain crosses the membrane as a helical span at residues 153 to 166 (VFVSVFLIYPLGQS). His-198 serves as a coordination point for chlorophyll a. The chain crosses the membrane as a helical span at residues 208–228 (AALLCAIHGATVENTLFEDGD). 2 residues coordinate a plastoquinone: His-215 and Phe-262. His-215 is a Fe cation binding site. His-269 lines the Fe cation pocket. Residues 279-295 (GLWMSALGVVGLALNLR) traverse the membrane as a helical segment.

This sequence belongs to the reaction center PufL/M/PsbA/D family. PSII is composed of 1 copy each of membrane proteins PsbA, PsbB, PsbC, PsbD, PsbE, PsbF, PsbH, PsbI, PsbJ, PsbK, PsbL, PsbM, PsbT, PsbX, PsbY, PsbZ, Psb30/Ycf12, at least 3 peripheral proteins of the oxygen-evolving complex and a large number of cofactors. It forms dimeric complexes. Requires The D1/D2 heterodimer binds P680, chlorophylls that are the primary electron donor of PSII, and subsequent electron acceptors. It shares a non-heme iron and each subunit binds pheophytin, quinone, additional chlorophylls, carotenoids and lipids. There is also a Cl(-1) ion associated with D1 and D2, which is required for oxygen evolution. The PSII complex binds additional chlorophylls, carotenoids and specific lipids. as cofactor.

It localises to the plastid. The protein resides in the chloroplast thylakoid membrane. It carries out the reaction 2 a plastoquinone + 4 hnu + 2 H2O = 2 a plastoquinol + O2. Functionally, photosystem II (PSII) is a light-driven water:plastoquinone oxidoreductase that uses light energy to abstract electrons from H(2)O, generating O(2) and a proton gradient subsequently used for ATP formation. It consists of a core antenna complex that captures photons, and an electron transfer chain that converts photonic excitation into a charge separation. The D1/D2 (PsbA/PsbD) reaction center heterodimer binds P680, the primary electron donor of PSII as well as several subsequent electron acceptors. D2 is needed for assembly of a stable PSII complex. This is Photosystem II D2 protein from Populus deltoides (Eastern poplar).